Consider the following 366-residue polypeptide: Anhydro-N-acetylmuramic acid kinase (366 aa).

12–19 (GTSLDGID) is a binding site for ATP.

This sequence belongs to the anhydro-N-acetylmuramic acid kinase family.

The enzyme catalyses 1,6-anhydro-N-acetyl-beta-muramate + ATP + H2O = N-acetyl-D-muramate 6-phosphate + ADP + H(+). It participates in amino-sugar metabolism; 1,6-anhydro-N-acetylmuramate degradation. Its pathway is cell wall biogenesis; peptidoglycan recycling. Functionally, catalyzes the specific phosphorylation of 1,6-anhydro-N-acetylmuramic acid (anhMurNAc) with the simultaneous cleavage of the 1,6-anhydro ring, generating MurNAc-6-P. Is required for the utilization of anhMurNAc either imported from the medium or derived from its own cell wall murein, and thus plays a role in cell wall recycling. This Nitrosospira multiformis (strain ATCC 25196 / NCIMB 11849 / C 71) protein is Anhydro-N-acetylmuramic acid kinase.